The chain runs to 539 residues: uncharacterized protein (539 aa).

An FAD-binding site is contributed by 6 to 20 (LIIGGGGAAARAAIE). Residues His-227 and Arg-243 contribute to the active site.

This sequence belongs to the FAD-dependent oxidoreductase 2 family. FRD/SDH subfamily. It depends on FAD as a cofactor.

This is an uncharacterized protein from Methanocaldococcus jannaschii (strain ATCC 43067 / DSM 2661 / JAL-1 / JCM 10045 / NBRC 100440) (Methanococcus jannaschii).